A 438-amino-acid polypeptide reads, in one-letter code: Plasmalemma vesicle-associated protein (438 aa).

Topologically, residues Met-1–Tyr-26 are cytoplasmic. The helical; Signal-anchor for type II membrane protein transmembrane segment at Phe-27–Ile-47 threads the bilayer. Residues Tyr-48–Gly-438 lie on the Extracellular side of the membrane. 4 N-linked (GlcNAc...) asparagine glycosylation sites follow: Asn-82, Asn-88, Asn-112, and Asn-150. 3 coiled-coil regions span residues Lys-140–Leu-160, Lys-189–Cys-224, and Glu-281–Leu-383. Residues Ser-391 to Ser-413 form a disordered region. A compositionally biased stretch (pro residues) spans Ala-394–Asp-410.

Homodimer. Expressed in lung, kidney, spleen, heart, muscle, eye, pancreas, thyroid, thymus, submaxillary gland, prostate, epididymis, uterus and liver.

It is found in the cell membrane. It localises to the membrane. The protein resides in the caveola. Its subcellular location is the cytoplasm. The protein localises to the perinuclear region. Endothelial cell-specific membrane protein involved in the formation of the diaphragms that bridge endothelial fenestrae. It is also required for the formation of stomata of caveolae and transendothelial channels. Functions in microvascular permeability, endothelial fenestrae contributing to the passage of water and solutes and regulating transcellular versus paracellular flow in different organs. Plays a specific role in embryonic development. This is Plasmalemma vesicle-associated protein (Plvap) from Mus musculus (Mouse).